The primary structure comprises 264 residues: Protein FAM228B (264 aa).

This sequence belongs to the FAM228 family.

This Bos taurus (Bovine) protein is Protein FAM228B (FAM228B).